The following is a 322-amino-acid chain: Phosphatidylserine decarboxylase proenzyme (322 aa).

Catalysis depends on charge relay system; for autoendoproteolytic cleavage activity residues Asp-90, His-147, and Ser-254. The Schiff-base intermediate with substrate; via pyruvic acid; for decarboxylase activity role is filled by Ser-254. Ser-254 is subject to Pyruvic acid (Ser); by autocatalysis. The tract at residues 296-322 (EPAPLPAEEIKAEHDASPLVDNKKDDT) is disordered. Residues 303 to 322 (EEIKAEHDASPLVDNKKDDT) are compositionally biased toward basic and acidic residues.

This sequence belongs to the phosphatidylserine decarboxylase family. PSD-B subfamily. Prokaryotic type I sub-subfamily. As to quaternary structure, heterodimer of a large membrane-associated beta subunit and a small pyruvoyl-containing alpha subunit. Pyruvate serves as cofactor. Post-translationally, is synthesized initially as an inactive proenzyme. Formation of the active enzyme involves a self-maturation process in which the active site pyruvoyl group is generated from an internal serine residue via an autocatalytic post-translational modification. Two non-identical subunits are generated from the proenzyme in this reaction, and the pyruvate is formed at the N-terminus of the alpha chain, which is derived from the carboxyl end of the proenzyme. The autoendoproteolytic cleavage occurs by a canonical serine protease mechanism, in which the side chain hydroxyl group of the serine supplies its oxygen atom to form the C-terminus of the beta chain, while the remainder of the serine residue undergoes an oxidative deamination to produce ammonia and the pyruvoyl prosthetic group on the alpha chain. During this reaction, the Ser that is part of the protease active site of the proenzyme becomes the pyruvoyl prosthetic group, which constitutes an essential element of the active site of the mature decarboxylase.

The protein resides in the cell membrane. It carries out the reaction a 1,2-diacyl-sn-glycero-3-phospho-L-serine + H(+) = a 1,2-diacyl-sn-glycero-3-phosphoethanolamine + CO2. Its pathway is phospholipid metabolism; phosphatidylethanolamine biosynthesis; phosphatidylethanolamine from CDP-diacylglycerol: step 2/2. In terms of biological role, catalyzes the formation of phosphatidylethanolamine (PtdEtn) from phosphatidylserine (PtdSer). The polypeptide is Phosphatidylserine decarboxylase proenzyme (Salmonella dublin (strain CT_02021853)).